The chain runs to 205 residues: Peptidyl-tRNA hydrolase (205 aa).

TRNA is bound at residue Y14. H19 acts as the Proton acceptor in catalysis. Y64, N66, and N112 together coordinate tRNA.

It belongs to the PTH family. Monomer.

The protein localises to the cytoplasm. The enzyme catalyses an N-acyl-L-alpha-aminoacyl-tRNA + H2O = an N-acyl-L-amino acid + a tRNA + H(+). Its function is as follows. Hydrolyzes ribosome-free peptidyl-tRNAs (with 1 or more amino acids incorporated), which drop off the ribosome during protein synthesis, or as a result of ribosome stalling. Catalyzes the release of premature peptidyl moieties from peptidyl-tRNA molecules trapped in stalled 50S ribosomal subunits, and thus maintains levels of free tRNAs and 50S ribosomes. This Parvibaculum lavamentivorans (strain DS-1 / DSM 13023 / NCIMB 13966) protein is Peptidyl-tRNA hydrolase.